Here is a 223-residue protein sequence, read N- to C-terminus: MEVLVTGGDTDLGRTMAEGFRNDGHKVTLVGARRGDLEVAAKELDVDAVVCDTTDPTSLTEARGLFPRHLDTIVNVPAPSWDAGDPRAYSVSDTANAWRNALDATVLSVVLTVQSVGDHLRSGGSIVSVVAENPPAGGAESAIKAALSNWIAGQAAVFGTRGITINTVACGRSVQTGYEGLSRTPAPVAAEIARLALFLTTPAARHITGQTLHVSHGALAHFG.

4 to 28 is a binding site for NADP(+); the sequence is LVTGGDTDLGRTMAEGFRNDGHKVT. Substrate is bound at residue S128.

The protein belongs to the short-chain dehydrogenases/reductases (SDR) family.

In Mycobacterium tuberculosis (strain CDC 1551 / Oshkosh), this protein is Putative oxidoreductase MT1904.